The sequence spans 341 residues: MAP3K12-binding inhibitory protein 1 (341 aa).

Ser91 is modified (phosphoserine). Glycyl lysine isopeptide (Lys-Gly) (interchain with G-Cter in SUMO2) cross-links involve residues Lys94, Lys127, Lys137, Lys151, and Lys233. Positions 170–341 (AEINENNVRE…EADSMAAHLP (172 aa)) are interaction with MAP3K12. Positions 269–283 (IYQRIKKLEDKILEL) are leucine-zipper 1. Lys299 is modified (N6-acetyllysine; alternate). Lys299 participates in a covalent cross-link: Glycyl lysine isopeptide (Lys-Gly) (interchain with G-Cter in SUMO2); alternate. Glycyl lysine isopeptide (Lys-Gly) (interchain with G-Cter in SUMO2) cross-links involve residues Lys302 and Lys323. Residues 312–327 (LAELDEKISALKRALL) are leucine-zipper 2.

Component of the ADA2A-containing complex (ATAC), composed of KAT14, KAT2A, TADA2L, TADA3L, ZZ3, MBIP, WDR5, YEATS2, CCDC101 and DR1. In the complex, it probably interacts directly with KAT2A, KAT14 and WDR5.

Its subcellular location is the nucleus. It is found in the cytoplasm. Inhibits the MAP3K12 activity to induce the activation of the JNK/SAPK pathway. Component of the ATAC complex, a complex with histone acetyltransferase activity on histones H3 and H4. In Mus musculus (Mouse), this protein is MAP3K12-binding inhibitory protein 1 (Mbip).